The chain runs to 197 residues: ATP synthase subunit delta (197 aa).

The span at 1–16 (MSSAVSASPQAASPQQ) shows a compositional bias: low complexity. The interval 1-20 (MSSAVSASPQAASPQQDRTS) is disordered.

Belongs to the ATPase delta chain family. As to quaternary structure, F-type ATPases have 2 components, F(1) - the catalytic core - and F(0) - the membrane proton channel. F(1) has five subunits: alpha(3), beta(3), gamma(1), delta(1), epsilon(1). F(0) has three main subunits: a(1), b(2) and c(10-14). The alpha and beta chains form an alternating ring which encloses part of the gamma chain. F(1) is attached to F(0) by a central stalk formed by the gamma and epsilon chains, while a peripheral stalk is formed by the delta and b chains.

The protein resides in the cell inner membrane. F(1)F(0) ATP synthase produces ATP from ADP in the presence of a proton or sodium gradient. F-type ATPases consist of two structural domains, F(1) containing the extramembraneous catalytic core and F(0) containing the membrane proton channel, linked together by a central stalk and a peripheral stalk. During catalysis, ATP synthesis in the catalytic domain of F(1) is coupled via a rotary mechanism of the central stalk subunits to proton translocation. Its function is as follows. This protein is part of the stalk that links CF(0) to CF(1). It either transmits conformational changes from CF(0) to CF(1) or is implicated in proton conduction. This chain is ATP synthase subunit delta, found in Acidiphilium cryptum (strain JF-5).